Here is a 216-residue protein sequence, read N- to C-terminus: MKINTVLFDLDGTLINTNELIISSFLHTLHTYYPNQYKREDVLPFIGPSLHDTFSKIDESKVEELITSYRQFNHDHHDELVEEYETVYETVQELKKQGYKVGIVTTKARQTVEMGLKLSKLDEFFDVVVTIDDVEHVKPHPEPLQKALQLLGAKPEEALMVGDNHHDIVGGQNAGTKTAAVSWTLKGRAYLEAYKPDFMLDKMSDLLPILSDMNRS.

Residue Asp-9 is the Nucleophile of the active site.

Belongs to the HAD-like hydrolase superfamily. PpaX family. It depends on Mg(2+) as a cofactor.

The enzyme catalyses diphosphate + H2O = 2 phosphate + H(+). Hydrolyzes pyrophosphate formed during P-Ser-HPr dephosphorylation by HPrK/P. Might play a role in controlling the intracellular pyrophosphate pool. The protein is Pyrophosphatase PpaX of Bacillus cereus (strain AH820).